A 182-amino-acid polypeptide reads, in one-letter code: Nascent polypeptide-associated complex subunit alpha (182 aa).

Residues 17-81 enclose the NAC-A/B domain; the sequence is NKNEKKAKEL…AKVDDMNQRI (65 aa). The tract at residues 120 to 148 is disordered; that stretch reads ASLQGGESNADAAEDDNEEVDETGINPKD. Residues 131 to 141 are compositionally biased toward acidic residues; sequence AAEDDNEEVDE. The UBA domain maps to 144–182; that stretch reads INPKDIDLIVEQTRVSRGSAVKALKKHDGDMVNALMELS.

Belongs to the NAC-alpha family. As to quaternary structure, part of the nascent polypeptide-associated complex (NAC), consisting of EGD2 and EGD1. NAC associates with ribosomes via EGD1.

The protein resides in the cytoplasm. The protein localises to the nucleus. In terms of biological role, component of the nascent polypeptide-associated complex (NAC), a dynamic component of the ribosomal exit tunnel, protecting the emerging polypeptides from interaction with other cytoplasmic proteins to ensure appropriate nascent protein targeting. The NAC complex also promotes mitochondrial protein import by enhancing productive ribosome interactions with the outer mitochondrial membrane and blocks the inappropriate interaction of ribosomes translating non-secretory nascent polypeptides with translocation sites in the membrane of the endoplasmic reticulum. EGD2 may also be involved in transcription regulation. This Lodderomyces elongisporus (strain ATCC 11503 / CBS 2605 / JCM 1781 / NBRC 1676 / NRRL YB-4239) (Yeast) protein is Nascent polypeptide-associated complex subunit alpha (EGD2).